The primary structure comprises 444 residues: N-succinylarginine dihydrolase (444 aa).

Substrate contacts are provided by residues 19–28 (AGLSFGNVAS), Asn110, and 137–138 (HR). Glu174 is a catalytic residue. Arg214 contacts substrate. The active site involves His250. Residues Asp252 and Asn362 each contribute to the substrate site. Cys368 functions as the Nucleophile in the catalytic mechanism.

Belongs to the succinylarginine dihydrolase family. As to quaternary structure, homodimer.

The enzyme catalyses N(2)-succinyl-L-arginine + 2 H2O + 2 H(+) = N(2)-succinyl-L-ornithine + 2 NH4(+) + CO2. Its pathway is amino-acid degradation; L-arginine degradation via AST pathway; L-glutamate and succinate from L-arginine: step 2/5. Functionally, catalyzes the hydrolysis of N(2)-succinylarginine into N(2)-succinylornithine, ammonia and CO(2). The polypeptide is N-succinylarginine dihydrolase (Shewanella denitrificans (strain OS217 / ATCC BAA-1090 / DSM 15013)).